The primary structure comprises 299 residues: Protease HtpX homolog (299 aa).

A run of 2 helical transmembrane segments spans residues Ile14–Leu34 and Leu39–Phe59. His143 is a Zn(2+) binding site. Glu144 is an active-site residue. A Zn(2+)-binding site is contributed by His147. 2 consecutive transmembrane segments (helical) span residues Ile158–Trp178 and Ile198–Val218. Residue Glu227 participates in Zn(2+) binding.

This sequence belongs to the peptidase M48B family. It depends on Zn(2+) as a cofactor.

It localises to the cell membrane. This Streptococcus mutans serotype c (strain ATCC 700610 / UA159) protein is Protease HtpX homolog.